Reading from the N-terminus, the 203-residue chain is E3 ubiquitin-protein ligase RNF152 (203 aa).

Residues 12–55 (CQICFNYYSPRRRPKLLDCKHTCCSVCLQQMRTSQKDVRCPWCR) form an RING-type zinc finger. The interval 106–165 (ISKERTLLPGDMGCRLLPGSQQKSLTVVTIPAEQQPLQGGAPPEAVEEEPDRRGVVKSST) is necessary for interaction with RRAGA. Positions 139 to 158 (QQPLQGGAPPEAVEEEPDRR) are disordered. A helical transmembrane segment spans residues 167–187 (SGVCTVILVACVLVFLLGIVL).

The protein belongs to the RNF152 family. Interacts with RRAGA (inactive GDP-bound form); stimulated by amino acid starvation. Interacts with SEC16A. Post-translationally, ubiquitinated. Autoubiquitinated in vitro, leading to its degradation by the proteasome.

It is found in the lysosome membrane. The enzyme catalyses S-ubiquitinyl-[E2 ubiquitin-conjugating enzyme]-L-cysteine + [acceptor protein]-L-lysine = [E2 ubiquitin-conjugating enzyme]-L-cysteine + N(6)-ubiquitinyl-[acceptor protein]-L-lysine.. It functions in the pathway protein modification; protein ubiquitination. Its function is as follows. E3 ubiquitin-protein ligase that acts as a negative regulator of mTORC1 signaling by mediating ubiquitination of RagA/RRAGA and RHEB. Catalyzes 'Lys-63'-linked polyubiquitination of RagA/RRAGA in response to amino acid starvation, thereby regulating mTORC1 signaling. Also mediates monoubiquitination of RHEB, promoting its association with the TSC-TBC complex and subsequent inhibition. Also mediates 'Lys-48'-linked polyubiquitination of target proteins and their subsequent targeting to the proteasome for degradation. Induces apoptosis when overexpressed. This Mus musculus (Mouse) protein is E3 ubiquitin-protein ligase RNF152.